The primary structure comprises 450 residues: Phosphoglucosamine mutase (450 aa).

Serine 101 acts as the Phosphoserine intermediate in catalysis. Mg(2+) contacts are provided by serine 101, aspartate 240, aspartate 242, and aspartate 244. Position 101 is a phosphoserine (serine 101).

Belongs to the phosphohexose mutase family. Mg(2+) serves as cofactor. Post-translationally, activated by phosphorylation.

The catalysed reaction is alpha-D-glucosamine 1-phosphate = D-glucosamine 6-phosphate. In terms of biological role, catalyzes the conversion of glucosamine-6-phosphate to glucosamine-1-phosphate. The sequence is that of Phosphoglucosamine mutase from Streptococcus equi subsp. equi (strain 4047).